The primary structure comprises 146 residues: Cytochrome c oxidase assembly factor 1 homolog (146 aa).

The Mitochondrial matrix portion of the chain corresponds to 1–14 (MMWQKYAGSRRSMP). The chain crosses the membrane as a helical span at residues 15 to 37 (LGARILFHGVFYAGGFAIVYYLI). Residues 38–146 (QKFHSRALYY…GENGDEVKKE (109 aa)) are Mitochondrial intermembrane-facing.

The protein belongs to the COA1 family. Component of the MITRAC (mitochondrial translation regulation assembly intermediate of cytochrome c oxidase complex) complex, the core components of this complex being COA3/MITRAC12 and COX14. Interacts with COX17 and COA6. Part of the mitochondrial complex I assembly/MCIA complex that comprises at least the core subunits TMEM126B, NDUFAF1, ECSIT and ACAD9 and complement subunits such as COA1 and TMEM186.

The protein localises to the mitochondrion inner membrane. Component of the MITRAC (mitochondrial translation regulation assembly intermediate of cytochrome c oxidase complex) complex, that regulates cytochrome c oxidase assembly. MITRAC complexes regulate both translation of mitochondrial encoded components and assembly of nuclear-encoded components imported in mitochondrion. Required for assembly of mitochondrial respiratory chain complex I and complex IV. As part of the MCIA complex, required for efficient assembly of the mitochondrial complex I. This Homo sapiens (Human) protein is Cytochrome c oxidase assembly factor 1 homolog.